Consider the following 551-residue polypeptide: mRNA cap guanine-N(7) methyltransferase (551 aa).

Over residues Met-1 to Pro-10 the composition is skewed to polar residues. The disordered stretch occupies residues Met-1–Glu-152. Composition is skewed to basic and acidic residues over residues Val-48 to His-76 and Leu-141 to Glu-152. The 358-residue stretch at Ser-194–Val-551 folds into the mRNA cap 0 methyltransferase domain. Asn-203–Asn-204 provides a ligand contact to mRNA. Residues Lys-207, Gly-250, Asp-274, Asp-312, Met-355–Ala-357, and Tyr-360 each bind S-adenosyl-L-methionine. The segment at Lys-407–Asp-430 is disordered. Positions Ala-408–Glu-420 are enriched in basic and acidic residues. Over residues Ala-421–Asp-430 the composition is skewed to acidic residues.

It belongs to the class I-like SAM-binding methyltransferase superfamily. mRNA cap 0 methyltransferase family.

It localises to the nucleus. It catalyses the reaction a 5'-end (5'-triphosphoguanosine)-ribonucleoside in mRNA + S-adenosyl-L-methionine = a 5'-end (N(7)-methyl 5'-triphosphoguanosine)-ribonucleoside in mRNA + S-adenosyl-L-homocysteine. Its function is as follows. Responsible for methylating the 5'-cap structure of mRNAs. This Aspergillus clavatus (strain ATCC 1007 / CBS 513.65 / DSM 816 / NCTC 3887 / NRRL 1 / QM 1276 / 107) protein is mRNA cap guanine-N(7) methyltransferase (abd1).